Consider the following 350-residue polypeptide: MQVSDFHFDLPDELIARYPQPERTASRLLQMDGNTGELIDGTFTDVLNQVQAGDLVVFNNTRVIPARMFGRKESGGKLEVLVERMLDEKSILAHVRCSKSPKPGTTIIVGENDEYSAEMVARHDALFELKFNSDKTVLDILEEIGHMPLPPYIDRPDEDADKERYQTVYNQKPGAVAAPTAGLHFDDVLLDKIKAKGAEFAYVTLHVGAGTFQPVKVDNINDHHMHAEYVEVPQEVVDAINATKARGGRIIAVGTTSVRSLESAAQDALKKGTELVPFFGDTEIFIYPGYEYQLVDCLITNFHLPESTLIMLVSAFAGYENTMNAYKHAVENKYRFFSYGDSMFIKKKTI.

Belongs to the QueA family. Monomer.

It localises to the cytoplasm. The catalysed reaction is 7-aminomethyl-7-carbaguanosine(34) in tRNA + S-adenosyl-L-methionine = epoxyqueuosine(34) in tRNA + adenine + L-methionine + 2 H(+). The protein operates within tRNA modification; tRNA-queuosine biosynthesis. Transfers and isomerizes the ribose moiety from AdoMet to the 7-aminomethyl group of 7-deazaguanine (preQ1-tRNA) to give epoxyqueuosine (oQ-tRNA). This chain is S-adenosylmethionine:tRNA ribosyltransferase-isomerase, found in Vibrio parahaemolyticus serotype O3:K6 (strain RIMD 2210633).